Reading from the N-terminus, the 485-residue chain is Glutamyl-tRNA(Gln) amidotransferase subunit A (485 aa).

Active-site charge relay system residues include lysine 79 and serine 154. Serine 178 (acyl-ester intermediate) is an active-site residue.

This sequence belongs to the amidase family. GatA subfamily. Heterotrimer of A, B and C subunits.

It carries out the reaction L-glutamyl-tRNA(Gln) + L-glutamine + ATP + H2O = L-glutaminyl-tRNA(Gln) + L-glutamate + ADP + phosphate + H(+). Functionally, allows the formation of correctly charged Gln-tRNA(Gln) through the transamidation of misacylated Glu-tRNA(Gln) in organisms which lack glutaminyl-tRNA synthetase. The reaction takes place in the presence of glutamine and ATP through an activated gamma-phospho-Glu-tRNA(Gln). The polypeptide is Glutamyl-tRNA(Gln) amidotransferase subunit A (Staphylococcus carnosus (strain TM300)).